The primary structure comprises 254 residues: uncharacterized protein (254 aa).

This is an uncharacterized protein from Methanocaldococcus jannaschii (strain ATCC 43067 / DSM 2661 / JAL-1 / JCM 10045 / NBRC 100440) (Methanococcus jannaschii).